A 248-amino-acid chain; its full sequence is Probable septum site-determining protein MinC (248 aa).

Residues 94 to 126 are disordered; the sequence is GMPPAMRGGQPAADFEAPAGEPQANPGAPEPQI.

Belongs to the MinC family. In terms of assembly, interacts with MinD and FtsZ.

In terms of biological role, cell division inhibitor that blocks the formation of polar Z ring septums. Rapidly oscillates between the poles of the cell to destabilize FtsZ filaments that have formed before they mature into polar Z rings. Prevents FtsZ polymerization. The protein is Probable septum site-determining protein MinC of Brucella suis biovar 1 (strain 1330).